A 315-amino-acid chain; its full sequence is Tyrosine recombinase XerC (315 aa).

Positions 14–105 (PDLLNERQSW…GLRSLLHHLQ (92 aa)) constitute a Core-binding (CB) domain. The 184-residue stretch at 126 to 309 (SLPKPLTDRQ…DTARLLEIYD (184 aa)) folds into the Tyr recombinase domain. Residues arginine 169, lysine 193, histidine 261, arginine 264, and histidine 287 contribute to the active site. Tyrosine 296 functions as the O-(3'-phospho-DNA)-tyrosine intermediate in the catalytic mechanism.

This sequence belongs to the 'phage' integrase family. XerC subfamily. In terms of assembly, forms a cyclic heterotetrameric complex composed of two molecules of XerC and two molecules of XerD.

The protein resides in the cytoplasm. Site-specific tyrosine recombinase, which acts by catalyzing the cutting and rejoining of the recombining DNA molecules. The XerC-XerD complex is essential to convert dimers of the bacterial chromosome into monomers to permit their segregation at cell division. It also contributes to the segregational stability of plasmids. The sequence is that of Tyrosine recombinase XerC from Agrobacterium fabrum (strain C58 / ATCC 33970) (Agrobacterium tumefaciens (strain C58)).